Here is an 89-residue protein sequence, read N- to C-terminus: Islet amyloid polypeptide (89 aa).

An N-terminal signal peptide occupies residues Met1–Ala22. Positions Thr23–Glu31 are excised as a propeptide. Residues Cys35 and Cys40 are joined by a disulfide bond. Tyrosine amide is present on Tyr70. Positions Ser74 to Phe89 are excised as a propeptide.

It belongs to the calcitonin family. As to quaternary structure, can form homodimers. Interacts with IDE and INS. Interaction with INS inhibits homodimerization and fibril formation.

The protein localises to the secreted. In terms of biological role, amylin/IAPP is a glucoregulatory peptide hormone that plays an important role in the regulation of energy homeostasis. Selectively inhibits insulin-stimulated glucose utilization and glycogen deposition in muscle, while not affecting adipocyte glucose metabolism. IAPP function is mediated by the CALCR-RAMPs (AMYRs) receptor complexes. Amylin can also bind CALCR receptor in the absence of RAMPs, although it is more selective for AMYRs. The sequence is that of Islet amyloid polypeptide (IAPP) from Felis catus (Cat).